We begin with the raw amino-acid sequence, 221 residues long: UPF0502 protein PSPTO_2686 (221 aa).

It belongs to the UPF0502 family.

The polypeptide is UPF0502 protein PSPTO_2686 (Pseudomonas syringae pv. tomato (strain ATCC BAA-871 / DC3000)).